Consider the following 561-residue polypeptide: Arginine--tRNA ligase (561 aa).

Positions 129–139 (ANPTGPLHIGH) match the 'HIGH' region motif.

It belongs to the class-I aminoacyl-tRNA synthetase family. As to quaternary structure, monomer.

It localises to the cytoplasm. It catalyses the reaction tRNA(Arg) + L-arginine + ATP = L-arginyl-tRNA(Arg) + AMP + diphosphate. This chain is Arginine--tRNA ligase, found in Geotalea uraniireducens (strain Rf4) (Geobacter uraniireducens).